Here is a 492-residue protein sequence, read N- to C-terminus: Fibroblast growth factor receptor substrate 3 (492 aa).

G2 carries N-myristoyl glycine lipidation. The IRS-type PTB domain maps to 13–115; it reads VPHNHPTKFK…QCNSINVTEE (103 aa). Disordered regions lie at residues 122–230, 328–414, 426–454, and 469–492; these read SSHP…SDQR, LPPV…PPRQ, GTAR…SSDS, and LQRA…DLPL. A compositionally biased stretch (polar residues) spans 371–382; sequence QKPTSTRASARS.

Binds NGFR, GRB2, PTPN11 and ERK2. Binds FGFR1 and NTRK1. Phosphorylated on tyrosine residues upon stimulation by BFGF or NGFB. Phosphorylated by ULK2 in vitro.

The protein localises to the membrane. In terms of biological role, adapter protein that links FGF and NGF receptors to downstream signaling pathways. Involved in the activation of MAP kinases. Down-regulates ERK2 signaling by interfering with the phosphorylation and nuclear translocation of ERK2. The protein is Fibroblast growth factor receptor substrate 3 (Frs3) of Mus musculus (Mouse).